We begin with the raw amino-acid sequence, 455 residues long: Tubulin delta chain (455 aa).

A GTP-binding site is contributed by 143 to 149 (AGGTGSG).

The protein belongs to the tubulin family. Found in a complex with TEDC1, TEDC2, TUBE1 and TUBD1. Highly expressed in testis.

It is found in the cell projection. It localises to the cilium. The protein localises to the cytoplasm. Its subcellular location is the cytoskeleton. The protein resides in the microtubule organizing center. It is found in the centrosome. It localises to the centriole. The protein localises to the nucleus. Acts as a positive regulator of hedgehog signaling and regulates ciliary function. This Mus musculus (Mouse) protein is Tubulin delta chain (Tubd1).